Consider the following 211-residue polypeptide: V-type ATP synthase subunit D (211 aa).

Belongs to the V-ATPase D subunit family.

Its function is as follows. Produces ATP from ADP in the presence of a proton gradient across the membrane. The protein is V-type ATP synthase subunit D of Fusobacterium nucleatum subsp. nucleatum (strain ATCC 25586 / DSM 15643 / BCRC 10681 / CIP 101130 / JCM 8532 / KCTC 2640 / LMG 13131 / VPI 4355).